Consider the following 490-residue polypeptide: Bifunctional protein GlmU (490 aa).

The pyrophosphorylase stretch occupies residues 1-241; that stretch reads MSSPGDTAVL…SALVAGVNNR (241 aa). UDP-N-acetyl-alpha-D-glucosamine-binding positions include 12–15, lysine 26, glutamine 83, 88–89, 112–114, glycine 151, glutamate 166, asparagine 181, and asparagine 239; these read LAAG, GT, and SGD. Aspartate 114 provides a ligand contact to Mg(2+). Asparagine 239 contacts Mg(2+). Residues 242–262 form a linker region; that stretch reads VQLAQLGAELNRRIVAAHQLA. Positions 263 to 490 are N-acetyltransferase; it reads GVTVVDPATT…AGGRPAGEAE (228 aa). UDP-N-acetyl-alpha-D-glucosamine-binding residues include arginine 344 and lysine 362. The active-site Proton acceptor is the histidine 374. 2 residues coordinate UDP-N-acetyl-alpha-D-glucosamine: tyrosine 377 and asparagine 388. Acetyl-CoA is bound by residues alanine 391, 397-398, serine 416, and alanine 434; that span reads NY. The disordered stretch occupies residues 462–490; it reads RRKRPGSAAARAAEAAEKAAGGRPAGEAE. Over residues 467–490 the composition is skewed to low complexity; that stretch reads GSAAARAAEAAEKAAGGRPAGEAE.

The protein in the N-terminal section; belongs to the N-acetylglucosamine-1-phosphate uridyltransferase family. This sequence in the C-terminal section; belongs to the transferase hexapeptide repeat family. In terms of assembly, homotrimer. The cofactor is Mg(2+).

The protein localises to the cytoplasm. It carries out the reaction alpha-D-glucosamine 1-phosphate + acetyl-CoA = N-acetyl-alpha-D-glucosamine 1-phosphate + CoA + H(+). The catalysed reaction is N-acetyl-alpha-D-glucosamine 1-phosphate + UTP + H(+) = UDP-N-acetyl-alpha-D-glucosamine + diphosphate. The protein operates within nucleotide-sugar biosynthesis; UDP-N-acetyl-alpha-D-glucosamine biosynthesis; N-acetyl-alpha-D-glucosamine 1-phosphate from alpha-D-glucosamine 6-phosphate (route II): step 2/2. Its pathway is nucleotide-sugar biosynthesis; UDP-N-acetyl-alpha-D-glucosamine biosynthesis; UDP-N-acetyl-alpha-D-glucosamine from N-acetyl-alpha-D-glucosamine 1-phosphate: step 1/1. It participates in bacterial outer membrane biogenesis; LPS lipid A biosynthesis. Catalyzes the last two sequential reactions in the de novo biosynthetic pathway for UDP-N-acetylglucosamine (UDP-GlcNAc). The C-terminal domain catalyzes the transfer of acetyl group from acetyl coenzyme A to glucosamine-1-phosphate (GlcN-1-P) to produce N-acetylglucosamine-1-phosphate (GlcNAc-1-P), which is converted into UDP-GlcNAc by the transfer of uridine 5-monophosphate (from uridine 5-triphosphate), a reaction catalyzed by the N-terminal domain. This Mycobacterium avium (strain 104) protein is Bifunctional protein GlmU.